Here is a 75-residue protein sequence, read N- to C-terminus: MATVVRLTRMGRNKRPFYRIVVTDSRKRRDSGWIESIGYYNPMVEPEVVKVDADRLAYWKSVGAKLSDRVARITK.

This sequence belongs to the bacterial ribosomal protein bS16 family.

This is Small ribosomal subunit protein bS16 from Campylobacter fetus subsp. fetus (strain 82-40).